A 294-amino-acid polypeptide reads, in one-letter code: tRNA dimethylallyltransferase (294 aa).

10 to 17 (GPTAVGKT) is a binding site for ATP. 12-17 (TAVGKT) lines the substrate pocket. The interval 35 to 38 (DSQQ) is interaction with substrate tRNA.

Belongs to the IPP transferase family. As to quaternary structure, monomer. It depends on Mg(2+) as a cofactor.

The enzyme catalyses adenosine(37) in tRNA + dimethylallyl diphosphate = N(6)-dimethylallyladenosine(37) in tRNA + diphosphate. Its function is as follows. Catalyzes the transfer of a dimethylallyl group onto the adenine at position 37 in tRNAs that read codons beginning with uridine, leading to the formation of N6-(dimethylallyl)adenosine (i(6)A). This is tRNA dimethylallyltransferase from Streptococcus pneumoniae (strain ATCC 700669 / Spain 23F-1).